A 251-amino-acid polypeptide reads, in one-letter code: tRNA (guanine-N(1)-)-methyltransferase (251 aa).

Residues glycine 113 and 133-138 contribute to the S-adenosyl-L-methionine site; that span reads IGDYVL.

It belongs to the RNA methyltransferase TrmD family. As to quaternary structure, homodimer.

It localises to the cytoplasm. It catalyses the reaction guanosine(37) in tRNA + S-adenosyl-L-methionine = N(1)-methylguanosine(37) in tRNA + S-adenosyl-L-homocysteine + H(+). Functionally, specifically methylates guanosine-37 in various tRNAs. The chain is tRNA (guanine-N(1)-)-methyltransferase from Pectobacterium atrosepticum (strain SCRI 1043 / ATCC BAA-672) (Erwinia carotovora subsp. atroseptica).